A 209-amino-acid chain; its full sequence is D-aminoacyl-tRNA deacylase 1 (209 aa).

The short motif at 139 to 140 is the Gly-cisPro motif, important for rejection of L-amino acids element; that stretch reads GP. The interval 142–209 is disordered; sequence TIELESPAPG…EGDVSSEREP (68 aa). 2 stretches are compositionally biased toward basic and acidic residues: residues 159-170 and 181-194; these read QLSKLEKQQQRK and SSKERNAPRKEDRS. A phosphoserine mark is found at Ser197, Ser204, and Ser205.

The protein belongs to the DTD family. In terms of assembly, homodimer. Interacts with CDC45 and TOPBP1. Post-translationally, preferentially phosphorylated in cells arrested early in S phase. Phosphorylation in the C-terminus weakens the interaction with CDC45.

The protein resides in the nucleus. It is found in the cytoplasm. It carries out the reaction glycyl-tRNA(Ala) + H2O = tRNA(Ala) + glycine + H(+). The enzyme catalyses a D-aminoacyl-tRNA + H2O = a tRNA + a D-alpha-amino acid + H(+). An aminoacyl-tRNA editing enzyme that deacylates mischarged D-aminoacyl-tRNAs. Also deacylates mischarged glycyl-tRNA(Ala), protecting cells against glycine mischarging by AlaRS. Acts via tRNA-based rather than protein-based catalysis; rejects L-amino acids rather than detecting D-amino acids in the active site. By recycling D-aminoacyl-tRNA to D-amino acids and free tRNA molecules, this enzyme counteracts the toxicity associated with the formation of D-aminoacyl-tRNA entities in vivo and helps enforce protein L-homochirality. In terms of biological role, ATPase involved in DNA replication, may facilitate loading of CDC45 onto pre-replication complexes. In Mus musculus (Mouse), this protein is D-aminoacyl-tRNA deacylase 1 (Dtd1).